Reading from the N-terminus, the 917-residue chain is Autophagy-related protein 9 (917 aa).

At 1–226 (MASNIFSRLV…AGFWCIIVQR (226 aa)) the chain is on the cytoplasmic side. Disordered stretches follow at residues 16 to 37 (RSFY…RAGI) and 119 to 177 (LLLS…QGRP). Residues 227 to 247 (ILELVNAAFVAVFLTFLSQCV) traverse the membrane as a helical segment. Residues 248-275 (DYHKLPHSKKMEDIIIPKCTQNMSLVWN) lie on the Lumenal side of the membrane. Residue Asn269 is glycosylated (N-linked (GlcNAc...) asparagine). Residues 276 to 296 (VGLWLFAIYFICRCFGLIIQL) traverse the membrane as a helical segment. Over 297–442 (RQLKHLRDFY…RQLSQKLKSR (146 aa)) the chain is Cytoplasmic. An intramembrane segment occupies 443 to 463 (FFFAGLMIFVMSPFIALYLIL). At 464-539 (VYFLTYFHEF…ARTVSFITGS (76 aa)) the chain is on the cytoplasmic side. The chain crosses the membrane as a helical span at residues 540–560 (IVAVLGLATIFDSEAFLTFEI). Over 561–564 (TPDR) the chain is Lumenal. Residues 565 to 585 (SVLFYVSILATLWAVARGNIS) traverse the membrane as a helical segment. The Cytoplasmic portion of the chain corresponds to 586-633 (DDNEVYDPEFAMKSIIEFTHYEPDHWRGRLHSTEVKNEFSELYKPRPQ). N6-acetyllysine is present on Lys621. Residues 634–654 (IFLEEILSILLTPLVLLVSLP) lie within the membrane without spanning it. The Cytoplasmic segment spans residues 655–917 (NSTDQIVDFF…FQQAHMHLRR (263 aa)). The segment at 854–895 (DARFGKLGDEDIDESGGALDESTWQTSPTKTLSRENSGANPQ) is disordered. Polar residues predominate over residues 875–895 (STWQTSPTKTLSRENSGANPQ).

The protein belongs to the ATG9 family. Homotrimer; forms a homotrimer with a central pore that forms a path between the two membrane leaflets. Interacts with HAT1. Post-translationally, acetylated by HAT1 at Lys-621, which increases the ability to bind vesicles during nutrient starvation induction. Phosphorylated by ATG1. ATG1 phosphorylation is required for preautophagosome elongation.

The protein localises to the preautophagosomal structure membrane. Its subcellular location is the cytoplasmic vesicle membrane. It is found in the vacuole membrane. The protein resides in the golgi apparatus membrane. It localises to the endoplasmic reticulum membrane. It catalyses the reaction a 1,2-diacyl-sn-glycero-3-phosphocholine(in) = a 1,2-diacyl-sn-glycero-3-phosphocholine(out). The catalysed reaction is a 1,2-diacyl-sn-glycero-3-phospho-L-serine(in) = a 1,2-diacyl-sn-glycero-3-phospho-L-serine(out). It carries out the reaction a 1,2-diacyl-sn-glycero-3-phosphoethanolamine(in) = a 1,2-diacyl-sn-glycero-3-phosphoethanolamine(out). The enzyme catalyses a 1,2-diacyl-sn-glycero-3-phospho-(1D-myo-inositol-3-phosphate)(in) = a 1,2-diacyl-sn-glycero-3-phospho-(1D-myo-inositol-3-phosphate)(out). Functionally, phospholipid scramblase involved in autophagy and cytoplasm to vacuole transport (Cvt) vesicle formation. Cycles between the preautophagosomal structure/phagophore assembly site (PAS) and the cytoplasmic vesicle pool and supplies membrane for the growing autophagosome. Lipid scramblase activity plays a key role in preautophagosomal structure/phagophore assembly by distributing the phospholipids that arrive through ATG2 from the cytoplasmic to the luminal leaflet of the bilayer, thereby driving autophagosomal membrane expansion. Required for mitophagy. Also involved in endoplasmic reticulum-specific autophagic process and is essential for the survival of cells subjected to severe ER stress. Different machineries are required for anterograde trafficking to the PAS during either the Cvt pathway or bulk autophagy and for retrograde trafficking. Plays a role in appressorium formation and pathogenicity. The protein is Autophagy-related protein 9 of Pyricularia oryzae (strain 70-15 / ATCC MYA-4617 / FGSC 8958) (Rice blast fungus).